A 341-amino-acid polypeptide reads, in one-letter code: MVANSGGGLTDADGGPVRHIPVLLKEVLEALAPAPGKLILDGTFGAGGYTSAILAAGADMIALDRDPTAIAAGQSMVAAHAGRLTLIQSQFSQLADHAPQGGLDGVVLDIGVSSMQLDEAERGFSFSKNGPLDMRMSASGVSAADVVNHAKLADLIRIFVFLGEEKQAPRIAHAIEKRRAEAPFVTTRDLAGLIEIVTPRKAKDKIHPATRVFQALRIFVNDELGELAQALFAAERALKPGGRLVVVTFHSLEDRIVKKFFADRSGRAGGSRHMPMVHERLATFDPIGKPMISASDAEAEINPRARSAKLRAGLRTSVQAEAADLSIFDLPNLASLGKLGG.

S-adenosyl-L-methionine contacts are provided by residues 47–49 (GGY), aspartate 64, phenylalanine 91, aspartate 109, and glutamine 116.

It belongs to the methyltransferase superfamily. RsmH family.

Its subcellular location is the cytoplasm. It carries out the reaction cytidine(1402) in 16S rRNA + S-adenosyl-L-methionine = N(4)-methylcytidine(1402) in 16S rRNA + S-adenosyl-L-homocysteine + H(+). In terms of biological role, specifically methylates the N4 position of cytidine in position 1402 (C1402) of 16S rRNA. The chain is Ribosomal RNA small subunit methyltransferase H from Rhizobium rhizogenes (strain K84 / ATCC BAA-868) (Agrobacterium radiobacter).